Here is a 102-residue protein sequence, read N- to C-terminus: uncharacterized protein (102 aa).

The N-terminal stretch at 1–22 (MKFKYGATLFSGFLGLSAILAA) is a signal peptide. Cysteine 23 carries N-palmitoyl cysteine lipidation. Residue cysteine 23 is the site of S-diacylglycerol cysteine attachment.

It belongs to the MG185/MG260 family.

The protein resides in the cell membrane. This is an uncharacterized protein from Mycoplasma pneumoniae (strain ATCC 29342 / M129 / Subtype 1) (Mycoplasmoides pneumoniae).